We begin with the raw amino-acid sequence, 196 residues long: Putative NADH dehydrogenase/NAD(P)H nitroreductase XOO4023 (196 aa).

This sequence belongs to the nitroreductase family. HadB/RutE subfamily. FMN is required as a cofactor.

The protein is Putative NADH dehydrogenase/NAD(P)H nitroreductase XOO4023 of Xanthomonas oryzae pv. oryzae (strain MAFF 311018).